The primary structure comprises 1111 residues: MIRKLMKIPPFFTALFASAMFTLSVSQGVLAANSTNVLPTEQSLKADLANAQKMSEGEAKNRLLAELQTSIDLLQQIQAQQKINDALQTTLSHSESEIRKNNAEIQALKKQQETATSTDDNAQSQDYLQNSLTKLNDQLQDTQNALSTANAQLAGQSSISERAQAALTENVVRTQQINQQLANNDIGSTLRKQYQIDLQLIDLKNSYNQNLLKNNDQLSLLYQSRYNLLNLRLQVQQQNIIAIQEVINQKNLQQSQNQVEQAQQQQKTVQNDYIQKELDRNAQLGQYLLQQTEKANSLTQDELRMRNILDSLTQTQRTIDEQISALQGTLVLSRIIQQQKQKLPTNLNIQGLSKQIADLRVHIFDITQKRNELYDLDNYINKVESEDGKQFTEAERTQVKTLLTERRKMTSDLIKSLNNQLNLAISLELTQLQITQISDQIQSKLEQQSFWVKSNNPINLDWVKMLPRALIEQFNGMLKKLGFPTNYDNLPYLLMYFLGLFIVGGAIFKFKNRIKQQLNKINREIHRLDTDSQWSTPLALLLTAFLTLSSTLWFLAVCQMIGFFFFKNPEEFWHWSFSMAGYWWFFTFWISLFRPNGIFVNHFESSKENAQRFRGVIQRIIVVVVLLLNTSVFSNVTDAGLANDVLGQINTIAALIFCAAIIAPRFNRVLRSYEPETNKHHWLIRIVQIGFRLIPVGLIVLIVLGYYYTALNLIEHFIHSYIAWCVWWLVRNTIYRGITVSSRRLAHRRLAEKRRQKALENNYENISSDDVVAVGEPEESLALNDVRSQLLRFVDLFIWTALLGIFYYVWSDLVTVVSYLREITLWQQTTTTDAGTVMESITLFNLLVALVIVGITYVLVRNISGILEVLIFSRVNLSQGTPYTITTLLTYIFIAIGGAWAFATLGMSWSKLQWLFAALSVGLGFGMQEIFANFVSGIILLFERPIRVGDVVTINEVSGTVAKIRIRAITLIDFDRKEVIVPNKSFVTGQVTNWALSNTMTRLVISVGVAYGSDLTLVRQLLLQAADEQPTILRDPKPSAYFLTFGASTLDHELRVYVEQVGDRTSTTDALNRRINELFAEHNIDIAFNQLDVFIKNNDTGEEIPFVDVKK.

The first 31 residues, 1–31 (MIRKLMKIPPFFTALFASAMFTLSVSQGVLA), serve as a signal peptide directing secretion. The next 11 membrane-spanning stretches (helical) occupy residues 490–510 (LPYL…IFKF), 538–558 (LALL…LAVC), 572–592 (FWHW…WISL), 620–640 (IIVV…TDAG), 644–664 (DVLG…IIAP), 694–714 (IPVG…LNLI), 797–817 (FIWT…VTVV), 840–860 (SITL…YVLV), 885–905 (ITTL…FATL), 922–942 (GLGF…ILLF), and 1003–1023 (LVIS…QLLL).

It belongs to the MscS (TC 1.A.23) family.

It localises to the cell membrane. This is an uncharacterized protein from Haemophilus influenzae (strain ATCC 51907 / DSM 11121 / KW20 / Rd).